Here is a 688-residue protein sequence, read N- to C-terminus: Glycine--tRNA ligase beta subunit (688 aa).

This sequence belongs to the class-II aminoacyl-tRNA synthetase family. In terms of assembly, tetramer of two alpha and two beta subunits.

The protein resides in the cytoplasm. The enzyme catalyses tRNA(Gly) + glycine + ATP = glycyl-tRNA(Gly) + AMP + diphosphate. The protein is Glycine--tRNA ligase beta subunit of Haemophilus influenzae (strain PittEE).